The sequence spans 223 residues: Octanoyltransferase (223 aa).

In terms of domain architecture, BPL/LPL catalytic spans 35–214; sequence GEARELIWLL…HFPAMLAGLR (180 aa). Residues 74-81, 145-147, and 158-160 contribute to the substrate site; these read RGGRYTYH, AIG, and GFS. Residue C176 is the Acyl-thioester intermediate of the active site.

The protein belongs to the LipB family.

It localises to the cytoplasm. It carries out the reaction octanoyl-[ACP] + L-lysyl-[protein] = N(6)-octanoyl-L-lysyl-[protein] + holo-[ACP] + H(+). It participates in protein modification; protein lipoylation via endogenous pathway; protein N(6)-(lipoyl)lysine from octanoyl-[acyl-carrier-protein]: step 1/2. Its function is as follows. Catalyzes the transfer of endogenously produced octanoic acid from octanoyl-acyl-carrier-protein onto the lipoyl domains of lipoate-dependent enzymes. Lipoyl-ACP can also act as a substrate although octanoyl-ACP is likely to be the physiological substrate. The chain is Octanoyltransferase from Rhizorhabdus wittichii (strain DSM 6014 / CCUG 31198 / JCM 15750 / NBRC 105917 / EY 4224 / RW1) (Sphingomonas wittichii).